The sequence spans 423 residues: Galactosylceramide sulfotransferase (423 aa).

Residues 1–14 (MPLPQKKRWESMAK) are Cytoplasmic-facing. A helical; Signal-anchor for type II membrane protein membrane pass occupies residues 15-35 (GLVLGALFTSFLLLLYSYAVP). Over 36-423 (PLYTGLASTT…WKFIRDFLRW (388 aa)) the chain is Lumenal. The segment at 48-70 (GAAPCSPAPREPEAPTSANGSAG) is disordered. N-linked (GlcNAc...) asparagine glycans are attached at residues Asn-66, Asn-156, and Asn-312.

It belongs to the galactose-3-O-sulfotransferase family.

It is found in the golgi apparatus membrane. The catalysed reaction is a beta-D-galactosyl-(1&lt;-&gt;1')-N-acylsphing-4-enine + 3'-phosphoadenylyl sulfate = an N-acyl-1-beta-D-(3-O-sulfo)-galactosyl-sphing-4-enine + adenosine 3',5'-bisphosphate + H(+). The enzyme catalyses a 1-O-alkyl-2-acyl-3-O-(beta-D-galactosyl)-sn-glycerol + 3'-phosphoadenylyl sulfate = a 1-O-alkyl-2-acyl-3-(beta-D-3-sulfogalactosyl)-sn-glycerol + adenosine 3',5'-bisphosphate + H(+). It catalyses the reaction a beta-D-Gal-(1&lt;-&gt;1')-ceramide + 3'-phosphoadenylyl sulfate = 1-(3-O-sulfo-beta-D-galactosyl)-ceramide + adenosine 3',5'-bisphosphate + H(+). It carries out the reaction a 1,2-diacyl-3-O-(beta-D-galactosyl)-sn-glycerol + 3'-phosphoadenylyl sulfate = 1,2-diacyl-3-(3-O-sulfo-beta-D-galactosyl)-sn-glycerol + adenosine 3',5'-bisphosphate + H(+). The catalysed reaction is a beta-D-Gal-(1-&gt;4)-beta-D-Glc-(1&lt;-&gt;1)-Cer(d18:1(4E)) + 3'-phosphoadenylyl sulfate = beta-D-3-sulfogalactosyl-(1-&gt;4)-beta-D-glucosyl-(1&lt;-&gt;1')-N-acylsphing-4-enine + adenosine 3',5'-bisphosphate + H(+). Its pathway is lipid metabolism; sphingolipid metabolism. Functionally, catalyzes the transfer of a sulfate group to position 3 of non-reducing beta-galactosyl residues in glycerolipids and sphingolipids, therefore participates in the biosynthesis of sulfoglycolipids. Catalyzes the synthesis of galactosylceramide sulfate (sulfatide), a major lipid component of the myelin sheath and of monogalactosylalkylacylglycerol sulfate (seminolipid), present in spermatocytes. Seems to prefer beta-glycosides at the non-reducing termini of sugar chains attached to a lipid moiety. Also acts on lactosylceramide, galactosyl 1-alkyl-2-sn-glycerol and galactosyl diacylglycerol (in vitro). This is Galactosylceramide sulfotransferase from Bos taurus (Bovine).